A 256-amino-acid polypeptide reads, in one-letter code: Non-specific lipid transfer protein GPI-anchored 23 (256 aa).

The signal sequence occupies residues 1 to 21 (MKPSFVLLSIVLLLSSSLSDA). A glycan (N-linked (GlcNAc...) asparagine) is linked at asparagine 41. 4 disulfides stabilise this stretch: cysteine 45-cysteine 88, cysteine 55-cysteine 72, cysteine 73-cysteine 113, and cysteine 86-cysteine 121. Residues 125 to 230 (TPAASTPVSP…SPSPSPSPSI (106 aa)) are disordered. Positions 138–230 (SPTTSPSSAK…SPSPSPSPSI (93 aa)) are enriched in low complexity. Serine 225 is lipidated: GPI-anchor amidated serine. Residues 226–256 (PSPSISSSGILLVSKLFIAVVMVSSFLYILA) constitute a propeptide, removed in mature form.

It belongs to the plant LTP family. Confined to the anthers of the inflorescence.

Its subcellular location is the cell membrane. Its function is as follows. Probable lipid transfer protein. This is Non-specific lipid transfer protein GPI-anchored 23 from Arabidopsis thaliana (Mouse-ear cress).